The chain runs to 266 residues: MLSIPLVCSSDFAPAAQVLAQEFNLPIRVGEVPETIGDCEFVLVLDETGLALQQTGRKAPGAVRAEFTEGAVDHRRKFGGGKGQMIAKAVGVKAGFSPRVLDATAGLGRDAFVLATLGCRLQMIERSPLVFALLRDGLARAHAFAHAQDRELLQVVERMELAAQDSKTYLQGLAPEQFPDVIYLDPMFPERQKSADVKKEMRAFHSIVGTDEDADVLLPLALEHVRFRVVVKRPRKAPFLNNQIPSYQLEGKSSRYDIYTRKKLPD.

Residues 109–110, 125–126, and aspartate 185 each bind S-adenosyl-L-methionine; these read RD and ER.

It belongs to the methyltransferase superfamily. RsmJ family.

The protein localises to the cytoplasm. The catalysed reaction is guanosine(1516) in 16S rRNA + S-adenosyl-L-methionine = N(2)-methylguanosine(1516) in 16S rRNA + S-adenosyl-L-homocysteine + H(+). Functionally, specifically methylates the guanosine in position 1516 of 16S rRNA. This Cellvibrio japonicus (strain Ueda107) (Pseudomonas fluorescens subsp. cellulosa) protein is Ribosomal RNA small subunit methyltransferase J.